The chain runs to 264 residues: 3-methyl-2-oxobutanoate hydroxymethyltransferase (264 aa).

Aspartate 45 and aspartate 84 together coordinate Mg(2+). 3-methyl-2-oxobutanoate is bound by residues 45 to 46 (DS), aspartate 84, and lysine 112. Glutamate 114 provides a ligand contact to Mg(2+). Glutamate 181 serves as the catalytic Proton acceptor.

Belongs to the PanB family. In terms of assembly, homodecamer; pentamer of dimers. It depends on Mg(2+) as a cofactor.

It is found in the cytoplasm. It catalyses the reaction 3-methyl-2-oxobutanoate + (6R)-5,10-methylene-5,6,7,8-tetrahydrofolate + H2O = 2-dehydropantoate + (6S)-5,6,7,8-tetrahydrofolate. Its pathway is cofactor biosynthesis; (R)-pantothenate biosynthesis; (R)-pantoate from 3-methyl-2-oxobutanoate: step 1/2. Its function is as follows. Catalyzes the reversible reaction in which hydroxymethyl group from 5,10-methylenetetrahydrofolate is transferred onto alpha-ketoisovalerate to form ketopantoate. The sequence is that of 3-methyl-2-oxobutanoate hydroxymethyltransferase from Escherichia coli O7:K1 (strain IAI39 / ExPEC).